Here is a 112-residue protein sequence, read N- to C-terminus: ATP synthase epsilon chain (112 aa).

The protein belongs to the ATPase epsilon chain family. As to quaternary structure, F-type ATPases have 2 components, CF(1) - the catalytic core - and CF(0) - the membrane proton channel. CF(1) has five subunits: alpha(3), beta(3), gamma(1), delta(1), epsilon(1). CF(0) has three main subunits: a, b and c.

It is found in the cell membrane. Its function is as follows. Produces ATP from ADP in the presence of a proton gradient across the membrane. The protein is ATP synthase epsilon chain of Rickettsia africae (strain ESF-5).